Here is a 374-residue protein sequence, read N- to C-terminus: Chaperone protein DnaJ (374 aa).

The J domain occupies 5–70 (DYYEILEIER…GKRQLYDRYG (66 aa)). Residues 136–213 (GCKKEIKIRY…CNGKGHENKE (78 aa)) form a CR-type zinc finger. Residues C149, C152, C165, C168, C187, C190, C201, and C204 each coordinate Zn(2+). 4 CXXCXGXG motif repeats span residues 149 to 156 (CPDCKGTG), 165 to 172 (CPDCGGRG), 187 to 194 (CPKCGGSG), and 201 to 208 (CPKCNGKG).

It belongs to the DnaJ family. Homodimer. The cofactor is Zn(2+).

The protein localises to the cytoplasm. Its function is as follows. Participates actively in the response to hyperosmotic and heat shock by preventing the aggregation of stress-denatured proteins and by disaggregating proteins, also in an autonomous, DnaK-independent fashion. Unfolded proteins bind initially to DnaJ; upon interaction with the DnaJ-bound protein, DnaK hydrolyzes its bound ATP, resulting in the formation of a stable complex. GrpE releases ADP from DnaK; ATP binding to DnaK triggers the release of the substrate protein, thus completing the reaction cycle. Several rounds of ATP-dependent interactions between DnaJ, DnaK and GrpE are required for fully efficient folding. Also involved, together with DnaK and GrpE, in the DNA replication of plasmids through activation of initiation proteins. This is Chaperone protein DnaJ from Wolinella succinogenes (strain ATCC 29543 / DSM 1740 / CCUG 13145 / JCM 31913 / LMG 7466 / NCTC 11488 / FDC 602W) (Vibrio succinogenes).